Here is a 234-residue protein sequence, read N- to C-terminus: MGKTTKRMRMISNQIDRTKQYNIHEAIPLLKDHATVKFIESLDVAVKLGINARKSSQNIHSATILPHGIGRSIKVAVFAQGINVSIAETAGADLVGMDNLAAQITKGNINFDVVIASPDTMHLVSTLGQILGPKGMMPNTKTGTITQNIALAIKEIKSGQIRYHNDKNGIIHTTIGKINFESYQLIENLEALLRALKKDKPLQTKGIYFKKICLSTTMGPSLTIDQCSLSTLVK.

This sequence belongs to the universal ribosomal protein uL1 family. Part of the 50S ribosomal subunit.

Its function is as follows. Binds directly to 23S rRNA. The L1 stalk is quite mobile in the ribosome, and is involved in E site tRNA release. Protein L1 is also a translational repressor protein, it controls the translation of the L11 operon by binding to its mRNA. This is Large ribosomal subunit protein uL1 from Baumannia cicadellinicola subsp. Homalodisca coagulata.